The following is an 84-amino-acid chain: Beta-cardiotoxin CTX23 (84 aa).

The N-terminal stretch at Met1–Thr21 is a signal peptide. 4 disulfide bridges follow: Cys24–Cys43, Cys36–Cys61, Cys65–Cys76, and Cys77–Cys82.

The protein belongs to the three-finger toxin family. Short-chain subfamily. Aminergic toxin sub-subfamily. As to expression, expressed by the venom gland.

It is found in the secreted. Functionally, acts as a beta-blocker by binding to beta-1 and beta-2 adrenergic receptors (ADRB1 and ADRB2). It dose-dependently decreases the heart rate (bradycardia), whereas conventional cardiotoxins increases it. At 100 mg/kg, intraperitoneal injection into mice provokes labored breathing, impaired locomotion, lack of response to external stimuli, and death (after 30 minutes). This is Beta-cardiotoxin CTX23 from Ophiophagus hannah (King cobra).